We begin with the raw amino-acid sequence, 163 residues long: Neurotrophin-3 (163 aa).

The signal sequence occupies residues 1 to 3; that stretch reads IQS. A propeptide spanning residues 4–119 is cleaved from the precursor; the sequence is TSMDQGILTE…VLNRTSRRKR (116 aa). N-linked (GlcNAc...) asparagine glycosylation occurs at Asn-112. The segment at 112 to 132 is disordered; the sequence is NRTSRRKREGKSHRGEYSVCD. Residues 123–132 are compositionally biased toward basic and acidic residues; the sequence is SHRGEYSVCD.

It belongs to the NGF-beta family.

Its subcellular location is the secreted. In terms of biological role, seems to promote the survival of visceral and proprioceptive sensory neurons. The chain is Neurotrophin-3 (NTF3) from Exiliboa placata (Oaxacan dwarf boa).